Here is a 211-residue protein sequence, read N- to C-terminus: Interleukin-6 (211 aa).

Residues 1-24 (MKFLSARDFQPVAFLGLMLLTATA) form the signal peptide. Cysteines 70 and 76 form a disulfide. At S79 the chain carries Phosphoserine. The cysteines at positions 99 and 109 are disulfide-linked.

This sequence belongs to the IL-6 superfamily. As to quaternary structure, component of a hexamer of two molecules each of IL6, IL6R and IL6ST; first binds to IL6R to associate with the signaling subunit IL6ST. Interacts with IL6R (via the N-terminal ectodomain); this interaction may be affected by IL6R-binding with SORL1, hence decreasing IL6 cis signaling. Interacts with SORL1 (via the N-terminal ectodomain); this interaction leads to IL6 internalization and lysosomal degradation. May form a trimeric complex with the soluble SORL1 ectodomain and soluble IL6R receptor; this interaction might stabilize circulating IL6, hence promoting IL6 trans signaling.

The protein resides in the secreted. Its function is as follows. Cytokine with a wide variety of biological functions in immunity, tissue regeneration, and metabolism. Binds to IL6R, then the complex associates to the signaling subunit IL6ST/gp130 to trigger the intracellular IL6-signaling pathway. The interaction with the membrane-bound IL6R and IL6ST stimulates 'classic signaling', whereas the binding of IL6 and soluble IL6R to IL6ST stimulates 'trans-signaling'. Alternatively, 'cluster signaling' occurs when membrane-bound IL6:IL6R complexes on transmitter cells activate IL6ST receptors on neighboring receiver cells. In terms of biological role, IL6 is a potent inducer of the acute phase response. Rapid production of IL6 contributes to host defense during infection and tissue injury, but excessive IL6 synthesis is involved in disease pathology. In the innate immune response, is synthesized by myeloid cells, such as macrophages and dendritic cells, upon recognition of pathogens through toll-like receptors (TLRs) at the site of infection or tissue injury. In the adaptive immune response, is required for the differentiation of B-cells into immunoglolin-secreting cells. Plays a major role in the differentiation of CD4(+) T cell subsets. Essential factor for the development of T follicular helper (Tfh) cells that are required for the induction of germinal-center formation. Together with IL21, controls the early generation of Tfh cells and are critical for an effective antibody response to acute viral infection. Required to drive naive CD4(+) T cells to the Th17 lineage, through 'cluster signaling' by dendritic cells. Also required for proliferation of myeloma cells and the survival of plasmablast cells. Functionally, acts as an essential factor in bone homeostasis and on vessels directly or indirectly by induction of VEGF, resulting in increased angiogenesis activity and vascular permeability. Induces, through 'trans-signaling' and synergistically with IL1B and TNF, the production of VEGF. Involved in metabolic controls, is discharged into the bloodstream after muscle contraction increasing lipolysis and improving insulin resistance. 'Trans-signaling' in central nervous system regulates energy and glucose homeostasis. Mediates, through GLP-1, crosstalk between insulin-sensitive tissues, intestinal L cells and pancreatic islets to adapt to changes in insulin demand. Also acts as a myokine. Plays a protective role during liver injury, being required for maintenance of tissue regeneration. Also has a pivotal role in iron metabolism by regulating HAMP/hepcidin expression upon inflammation or bacterial infection. Through activation of IL6ST-YAP-NOTCH pathway, induces inflammation-induced epithelial regeneration. This chain is Interleukin-6, found in Rattus norvegicus (Rat).